Consider the following 202-residue polypeptide: FMN reductase (NADH) RutF (202 aa).

The span at 168–191 (PRAPRGGSAPAEPARGARAIGARP) shows a compositional bias: low complexity. Residues 168-202 (PRAPRGGSAPAEPARGARAIGARPPEGPVLALRSA) are disordered.

Belongs to the non-flavoprotein flavin reductase family. RutF subfamily.

It catalyses the reaction FMNH2 + NAD(+) = FMN + NADH + 2 H(+). Its function is as follows. Catalyzes the reduction of FMN to FMNH2 which is used to reduce pyrimidine by RutA via the Rut pathway. The chain is FMN reductase (NADH) RutF from Methylorubrum populi (strain ATCC BAA-705 / NCIMB 13946 / BJ001) (Methylobacterium populi).